The following is a 219-amino-acid chain: 7-cyano-7-deazaguanine synthase (219 aa).

Phe-10–Leu-20 contacts ATP. Positions 188, 197, 200, and 203 each coordinate Zn(2+).

The protein belongs to the QueC family. Homodimer. Zn(2+) is required as a cofactor.

The catalysed reaction is 7-carboxy-7-deazaguanine + NH4(+) + ATP = 7-cyano-7-deazaguanine + ADP + phosphate + H2O + H(+). It participates in purine metabolism; 7-cyano-7-deazaguanine biosynthesis. Catalyzes the ATP-dependent conversion of 7-carboxy-7-deazaguanine (CDG) to 7-cyano-7-deazaguanine (preQ(0)). This is 7-cyano-7-deazaguanine synthase from Clostridium botulinum (strain ATCC 19397 / Type A).